The primary structure comprises 379 residues: Mannitol-1-phosphate 5-dehydrogenase (379 aa).

3–14 (ALHFGAGNIGRG) is a binding site for NAD(+).

It belongs to the mannitol dehydrogenase family.

The enzyme catalyses D-mannitol 1-phosphate + NAD(+) = beta-D-fructose 6-phosphate + NADH + H(+). This is Mannitol-1-phosphate 5-dehydrogenase from Actinobacillus pleuropneumoniae serotype 3 (strain JL03).